We begin with the raw amino-acid sequence, 145 residues long: D-aminoacyl-tRNA deacylase (145 aa).

The short motif at 137–138 (GP) is the Gly-cisPro motif, important for rejection of L-amino acids element.

Belongs to the DTD family. As to quaternary structure, homodimer.

It localises to the cytoplasm. It carries out the reaction glycyl-tRNA(Ala) + H2O = tRNA(Ala) + glycine + H(+). The catalysed reaction is a D-aminoacyl-tRNA + H2O = a tRNA + a D-alpha-amino acid + H(+). Functionally, an aminoacyl-tRNA editing enzyme that deacylates mischarged D-aminoacyl-tRNAs. Also deacylates mischarged glycyl-tRNA(Ala), protecting cells against glycine mischarging by AlaRS. Acts via tRNA-based rather than protein-based catalysis; rejects L-amino acids rather than detecting D-amino acids in the active site. By recycling D-aminoacyl-tRNA to D-amino acids and free tRNA molecules, this enzyme counteracts the toxicity associated with the formation of D-aminoacyl-tRNA entities in vivo and helps enforce protein L-homochirality. The chain is D-aminoacyl-tRNA deacylase from Proteus mirabilis (strain HI4320).